A 309-amino-acid polypeptide reads, in one-letter code: Aspartate carbamoyltransferase catalytic subunit (309 aa).

2 residues coordinate carbamoyl phosphate: Arg48 and Thr49. Lys76 provides a ligand contact to L-aspartate. Carbamoyl phosphate-binding residues include Arg98, His128, and Gln131. Arg161 and Arg211 together coordinate L-aspartate. Carbamoyl phosphate contacts are provided by Ala250 and Pro251.

The protein belongs to the aspartate/ornithine carbamoyltransferase superfamily. ATCase family. Heterododecamer (2C3:3R2) of six catalytic PyrB chains organized as two trimers (C3), and six regulatory PyrI chains organized as three dimers (R2).

It carries out the reaction carbamoyl phosphate + L-aspartate = N-carbamoyl-L-aspartate + phosphate + H(+). Its pathway is pyrimidine metabolism; UMP biosynthesis via de novo pathway; (S)-dihydroorotate from bicarbonate: step 2/3. Catalyzes the condensation of carbamoyl phosphate and aspartate to form carbamoyl aspartate and inorganic phosphate, the committed step in the de novo pyrimidine nucleotide biosynthesis pathway. The sequence is that of Aspartate carbamoyltransferase catalytic subunit from Oceanobacillus iheyensis (strain DSM 14371 / CIP 107618 / JCM 11309 / KCTC 3954 / HTE831).